We begin with the raw amino-acid sequence, 766 residues long: Ribonuclease Z, mitochondrial (766 aa).

The transit peptide at 1-25 directs the protein to the mitochondrion; sequence MYLVKSAGSPIYRTLRTLTTSNLMA.

This sequence belongs to the RNase Z family. Homodimer. Requires Zn(2+) as cofactor.

The protein resides in the nucleus. The protein localises to the mitochondrion. It catalyses the reaction Endonucleolytic cleavage of RNA, removing extra 3' nucleotides from tRNA precursor, generating 3' termini of tRNAs. A 3'-hydroxy group is left at the tRNA terminus and a 5'-phosphoryl group is left at the trailer molecule.. Its function is as follows. Zinc phosphodiesterase, which displays some tRNA 3'-processing endonuclease activity of nuclear and mitochondrial pre-tRNA. Probably involved in tRNA maturation, by removing a 3'-trailer from precursor tRNA. May participate in tRNA processing in the developing embryo. This Drosophila melanogaster (Fruit fly) protein is Ribonuclease Z, mitochondrial.